The following is a 171-amino-acid chain: S-ribosylhomocysteine lyase (171 aa).

Fe cation-binding residues include His54, His58, and Cys128.

It belongs to the LuxS family. As to quaternary structure, homodimer. The cofactor is Fe cation.

It catalyses the reaction S-(5-deoxy-D-ribos-5-yl)-L-homocysteine = (S)-4,5-dihydroxypentane-2,3-dione + L-homocysteine. Functionally, involved in the synthesis of autoinducer 2 (AI-2) which is secreted by bacteria and is used to communicate both the cell density and the metabolic potential of the environment. The regulation of gene expression in response to changes in cell density is called quorum sensing. Catalyzes the transformation of S-ribosylhomocysteine (RHC) to homocysteine (HC) and 4,5-dihydroxy-2,3-pentadione (DPD). This is S-ribosylhomocysteine lyase from Klebsiella pneumoniae (strain 342).